The following is a 233-amino-acid chain: Pre-mRNA-splicing factor syf-2 (233 aa).

Polar residues predominate over residues 1–16; the sequence is MSDSEQTSSGTASSGS. 2 disordered regions span residues 1 to 80 and 95 to 119; these read MSDS…EDKG and VTEKLEQKRKRKKNPDQGFASYEDM. Residues 17–80 are compositionally biased toward basic and acidic residues; it reads KMKDFNQRFR…QDRKEAEDKG (64 aa). The stretch at 18–77 forms a coiled coil; that stretch reads MKDFNQRFRDLHKMRQKARKENHAQVVEEDRRKKLPKNFEAKKERDQWQVKELQDRKEAE.

This sequence belongs to the SYF2 family. May be part of a spliceosome complex.

It localises to the nucleus. Functionally, may be involved in pre-mRNA splicing. This chain is Pre-mRNA-splicing factor syf-2, found in Caenorhabditis briggsae.